Reading from the N-terminus, the 149-residue chain is MDVQLPIEAKDIQKLIPHRYPFLQLDRITAFEPMKTLTAIKNVTINEPQFQGHFPDLPVMPGVLIIEAMAQACGTLAILSEGGRKENEFFFFAGIDEARFKRQVIPGDQLVFEVELLTSRRGIGKFNAVAKVDGQVAVEAIIMCAKRVV.

His53 is a catalytic residue.

Belongs to the thioester dehydratase family. FabZ subfamily.

It is found in the cytoplasm. It catalyses the reaction a (3R)-hydroxyacyl-[ACP] = a (2E)-enoyl-[ACP] + H2O. Its function is as follows. Involved in unsaturated fatty acids biosynthesis. Catalyzes the dehydration of short chain beta-hydroxyacyl-ACPs and long chain saturated and unsaturated beta-hydroxyacyl-ACPs. The chain is 3-hydroxyacyl-[acyl-carrier-protein] dehydratase FabZ from Neisseria meningitidis serogroup B (strain ATCC BAA-335 / MC58).